We begin with the raw amino-acid sequence, 160 residues long: Lymphocyte antigen 86 (160 aa).

The first 20 residues, Met-1 to Thr-20, serve as a signal peptide directing secretion. Disulfide bonds link Cys-28/Cys-53, Cys-40/Cys-149, and Cys-97/Cys-107.

M-shaped tetramer of two CD180-LY86 heterodimers. Detected in the macrophage-like 10.4 cells.

The protein localises to the secreted. The protein resides in the extracellular space. In terms of biological role, may cooperate with CD180 and TLR4 to mediate the innate immune response to bacterial lipopolysaccharide (LPS) and cytokine production. Important for efficient CD180 cell surface expression. The protein is Lymphocyte antigen 86 (LY86) of Gallus gallus (Chicken).